A 146-amino-acid polypeptide reads, in one-letter code: Anti-sigma F factor (146 aa).

The protein belongs to the anti-sigma-factor family.

The enzyme catalyses L-seryl-[protein] + ATP = O-phospho-L-seryl-[protein] + ADP + H(+). It catalyses the reaction L-threonyl-[protein] + ATP = O-phospho-L-threonyl-[protein] + ADP + H(+). Functionally, binds to sigma F and blocks its ability to form an RNA polymerase holoenzyme (E-sigma F). Phosphorylates SpoIIAA on a serine residue. This phosphorylation may enable SpoIIAA to act as an anti-anti-sigma factor that counteracts SpoIIAB and thus releases sigma F from inhibition. This is Anti-sigma F factor from Bacillus cytotoxicus (strain DSM 22905 / CIP 110041 / 391-98 / NVH 391-98).